The primary structure comprises 471 residues: Tryptophanase (471 aa).

N6-acetyllysine occurs at positions 5, 115, and 156. N6-(pyridoxal phosphate)lysine is present on K270. N6-acetyllysine is present on K450.

This sequence belongs to the beta-eliminating lyase family. In terms of assembly, homotetramer. Pyridoxal 5'-phosphate serves as cofactor.

It carries out the reaction L-tryptophan + H2O = indole + pyruvate + NH4(+). Its pathway is amino-acid degradation; L-tryptophan degradation via pyruvate pathway; indole and pyruvate from L-tryptophan: step 1/1. This chain is Tryptophanase, found in Escherichia coli O139:H28 (strain E24377A / ETEC).